A 375-amino-acid polypeptide reads, in one-letter code: Actin, cytoplasmic (375 aa).

The protein belongs to the actin family.

It localises to the cytoplasm. The protein resides in the cytoskeleton. It catalyses the reaction ATP + H2O = ADP + phosphate + H(+). Its function is as follows. Actins are highly conserved proteins that are involved in various types of cell motility and are ubiquitously expressed in all eukaryotic cells. This Oxytricha trifallax (Sterkiella histriomuscorum) protein is Actin, cytoplasmic.